Consider the following 93-residue polypeptide: Cell division topological specificity factor (93 aa).

The protein belongs to the MinE family.

Prevents the cell division inhibition by proteins MinC and MinD at internal division sites while permitting inhibition at polar sites. This ensures cell division at the proper site by restricting the formation of a division septum at the midpoint of the long axis of the cell. The polypeptide is Cell division topological specificity factor (Alkaliphilus oremlandii (strain OhILAs) (Clostridium oremlandii (strain OhILAs))).